The following is a 130-amino-acid chain: Protein CPn_0713/CP_0033/CPj0713/CpB0740 (130 aa).

This sequence belongs to the chlamydial CPn_0713/CT_663/TC_0034 family.

This is Protein CPn_0713/CP_0033/CPj0713/CpB0740 from Chlamydia pneumoniae (Chlamydophila pneumoniae).